The primary structure comprises 182 residues: Probable RNA 2'-phosphotransferase (182 aa).

It belongs to the KptA/TPT1 family.

Its function is as follows. Removes the 2'-phosphate from RNA via an intermediate in which the phosphate is ADP-ribosylated by NAD followed by a presumed transesterification to release the RNA and generate ADP-ribose 1''-2''-cyclic phosphate (APPR&gt;P). May function as an ADP-ribosylase. The protein is Probable RNA 2'-phosphotransferase of Pseudomonas paraeruginosa (strain DSM 24068 / PA7) (Pseudomonas aeruginosa (strain PA7)).